Reading from the N-terminus, the 165-residue chain is Myosin regulatory light chain 2A, cardiac muscle isoform (165 aa).

At Ala2 the chain carries N,N,N-trimethylalanine. EF-hand domains are found at residues 24-59, 94-128, and 129-164; these read AQIQ…LGRL, DPEE…QEGR, and FSQE…GEEK. Ca(2+)-binding residues include Asp37, Asn39, Asp41, and Asp48.

As to quaternary structure, myosin is a hexamer of 2 heavy chains and 4 light chains. The N-terminus is blocked. N,N,N-trimethylalanine, found in other myosin light chains would not have been detected in the N-terminal tryptic peptide in PubMed:7319048 because it would remain trimethylated and ninhydrin negative after hydrolysis.

The sequence is that of Myosin regulatory light chain 2A, cardiac muscle isoform from Gallus gallus (Chicken).